Here is a 798-residue protein sequence, read N- to C-terminus: Cadherin-20 (798 aa).

Residues 1-35 (MWTSGRMSNAKNLFGLGVSLYFWGLMDLTTTVLSG) form the signal peptide. Positions 36 to 58 (SARPLTEGPEDNLSDKLHQRMKR) are excised as a propeptide. Asn47 carries N-linked (GlcNAc...) asparagine glycosylation. Residues 59 to 618 (SWVWNQFFVL…AYVLPVSLSR (560 aa)) are Extracellular-facing. 5 Cadherin domains span residues 60–164 (WVWN…EPKF), 165–273 (LDGP…PPRF), 274–392 (PQKH…EPSF), 389–493 (EPSF…APEF), and 493–615 (FARF…LPVS). A Cell attachment site motif is present at residues 88-90 (RGD). Residue Asn260 is glycosylated (N-linked (GlcNAc...) asparagine). N-linked (GlcNAc...) asparagine glycans are attached at residues Asn419, Asn460, and Asn541. Residues 619 to 639 (GALIAILACIFVLLVLVLLIL) traverse the membrane as a helical segment. Topologically, residues 640–798 (SMRRQRKQPY…GATDSSGALW (159 aa)) are cytoplasmic.

In terms of tissue distribution, detected in embryonic spinal cord, in the brachial and lumbar section of motor neurons (at protein level). Detected in ventro-lateral portion of embryonic spinal cord, in the brachial and lumbar section of embryonic motor neurons. Detected in embryonic adductor motor neurons and embryonic dorsal root ganglion. Detected in the caudal half of newly generated somites and in presomitic mesoderm.

It is found in the cell membrane. In terms of biological role, cadherins are calcium-dependent cell adhesion proteins. They preferentially interact with themselves in a homophilic manner in connecting cells; cadherins may thus contribute to the sorting of heterogeneous cell types. This chain is Cadherin-20 (CDH20), found in Gallus gallus (Chicken).